A 509-amino-acid chain; its full sequence is Type II methyltransferase M.BsoBI (509 aa).

The protein belongs to the N(4)/N(6)-methyltransferase family. N(4) subfamily.

It carries out the reaction a 2'-deoxycytidine in DNA + S-adenosyl-L-methionine = an N(4)-methyl-2'-deoxycytidine in DNA + S-adenosyl-L-homocysteine + H(+). An alpha subtype methylase that recognizes the double-stranded sequence 5'-CYCGRG-3', methylates C-1 on both strands, and protects the DNA from cleavage by the BsoBI endonuclease. The polypeptide is Type II methyltransferase M.BsoBI (Geobacillus stearothermophilus (Bacillus stearothermophilus)).